Here is a 63-residue protein sequence, read N- to C-terminus: MGCGNSTAASAGAGQGPAGAAKDVTEESITEDDKRRNYGGVYVGLPSEAVNMVSNQTKTVQKN.

Over residues 1-12 (MGCGNSTAASAG) the composition is skewed to low complexity. Residues 1–40 (MGCGNSTAASAGAGQGPAGAAKDVTEESITEDDKRRNYGG) are disordered.

It belongs to the OCC1 family.

The sequence is that of Overexpressed in colon carcinoma 1 protein homolog from Bos taurus (Bovine).